The primary structure comprises 146 residues: Multiple coagulation factor deficiency protein 2 (146 aa).

Positions 1–26 are cleaved as a signal peptide; the sequence is MTMRSLLRTPFLCGLLWAFCAPGARA. In terms of domain architecture, EF-hand 1 spans 68–103; sequence SPQELQLHYFKMHDYDGNNLLDGLELSTAITHVHKE. Ca(2+) is bound by residues Asp81, Asp83, Asn85, and Glu92. Ser106 carries the phosphoserine modification. Residues 116–146 form the EF-hand 2 domain; that stretch reads ELINIIDGVLRDDDKNNDGYIDYAEFAKSLQ. Residues Asp129, Asn131, Asp133, Tyr135, and Glu140 each contribute to the Ca(2+) site.

Interacts in a calcium-dependent manner with LMAN1.

It is found in the endoplasmic reticulum-Golgi intermediate compartment. It localises to the endoplasmic reticulum. The protein resides in the golgi apparatus. The MCFD2-LMAN1 complex forms a specific cargo receptor for the ER-to-Golgi transport of selected proteins. Plays a role in the secretion of coagulation factors. The sequence is that of Multiple coagulation factor deficiency protein 2 (MCFD2) from Homo sapiens (Human).